The chain runs to 73 residues: Sec-independent protein translocase protein TatA (73 aa).

The helical transmembrane segment at 1-21 threads the bilayer; it reads MGSFSIWHWLIVLVIVMLVFG. A disordered region spans residues 50 to 73; it reads KEQIQQSSATAEKTVDVQAKDVNK. Residues 62–73 are compositionally biased toward basic and acidic residues; that stretch reads KTVDVQAKDVNK.

Belongs to the TatA/E family. The Tat system comprises two distinct complexes: a TatABC complex, containing multiple copies of TatA, TatB and TatC subunits, and a separate TatA complex, containing only TatA subunits. Substrates initially bind to the TatABC complex, which probably triggers association of the separate TatA complex to form the active translocon.

Its subcellular location is the cell inner membrane. In terms of biological role, part of the twin-arginine translocation (Tat) system that transports large folded proteins containing a characteristic twin-arginine motif in their signal peptide across membranes. TatA could form the protein-conducting channel of the Tat system. In Polynucleobacter necessarius subsp. necessarius (strain STIR1), this protein is Sec-independent protein translocase protein TatA.